Reading from the N-terminus, the 133-residue chain is MAANDTIADMLTRIRNANLARHQTTQVPATKMTRSIAKVLREEGFIAEIEEAEEGVKHNLVISLKYKGKNRQPLITALKRVSKPGLRVYSNRKELPRVLGGIGIAIISTSSGIMTDREARRQNLGGEVLCYVW.

This sequence belongs to the universal ribosomal protein uS8 family. Part of the 30S ribosomal subunit. Contacts proteins S5 and S12.

One of the primary rRNA binding proteins, it binds directly to 16S rRNA central domain where it helps coordinate assembly of the platform of the 30S subunit. This is Small ribosomal subunit protein uS8 from Nostoc punctiforme (strain ATCC 29133 / PCC 73102).